The primary structure comprises 176 residues: Mitochondrial inner membrane protein Mpv17 (176 aa).

4 helical membrane passes run 18–38 (VQVLTAGSLMGVGDMISQQLV), 53–73 (TMVSLGCGFVGPVVGGWYKVL), 94–114 (GGFAPCFLGCFLPLVGILNGM), and 131–151 (LITNYYLWPAVQLANFYLVPL).

This sequence belongs to the peroxisomal membrane protein PXMP2/4 family. High levels in heart, kidney, and brain, intermediate levels in testis, and low levels in liver and spleen.

It localises to the mitochondrion inner membrane. In terms of biological role, non-selective channel that modulates the membrane potential under normal conditions and oxidative stress, and is involved in mitochondrial homeostasis. Involved in mitochondrial deoxynucleoside triphosphates (dNTP) pool homeostasis and mitochondrial DNA (mtDNA) maintenance. May be involved in the regulation of reactive oxygen species metabolism and the control of oxidative phosphorylation. This chain is Mitochondrial inner membrane protein Mpv17, found in Mus musculus (Mouse).